Consider the following 251-residue polypeptide: CDP-diacylglycerol pyrophosphatase (251 aa).

The helical transmembrane segment at 5–25 (GYFLLAVIVIVAAAGVGYWKF) threads the bilayer.

Belongs to the Cdh family.

It is found in the cell inner membrane. It carries out the reaction a CDP-1,2-diacyl-sn-glycerol + H2O = a 1,2-diacyl-sn-glycero-3-phosphate + CMP + 2 H(+). It functions in the pathway phospholipid metabolism; CDP-diacylglycerol degradation; phosphatidate from CDP-diacylglycerol: step 1/1. This Salmonella enteritidis PT4 (strain P125109) protein is CDP-diacylglycerol pyrophosphatase.